The primary structure comprises 113 residues: Large ribosomal subunit protein bL19 (113 aa).

This sequence belongs to the bacterial ribosomal protein bL19 family.

Functionally, this protein is located at the 30S-50S ribosomal subunit interface and may play a role in the structure and function of the aminoacyl-tRNA binding site. The protein is Large ribosomal subunit protein bL19 of Corynebacterium jeikeium (strain K411).